The primary structure comprises 402 residues: Imidazolonepropionase (402 aa).

His66 and His68 together coordinate Fe(3+). Residues His66 and His68 each contribute to the Zn(2+) site. Residues Arg75, Tyr138, and His171 each coordinate 4-imidazolone-5-propanoate. Position 138 (Tyr138) interacts with N-formimidoyl-L-glutamate. His236 is a Fe(3+) binding site. His236 is a binding site for Zn(2+). Residue Gln239 coordinates 4-imidazolone-5-propanoate. Asp311 contacts Fe(3+). Asp311 serves as a coordination point for Zn(2+). 2 residues coordinate N-formimidoyl-L-glutamate: Asn313 and Gly315. Thr316 is a 4-imidazolone-5-propanoate binding site.

Belongs to the metallo-dependent hydrolases superfamily. HutI family. Requires Zn(2+) as cofactor. The cofactor is Fe(3+).

It is found in the cytoplasm. It catalyses the reaction 4-imidazolone-5-propanoate + H2O = N-formimidoyl-L-glutamate. Its pathway is amino-acid degradation; L-histidine degradation into L-glutamate; N-formimidoyl-L-glutamate from L-histidine: step 3/3. In terms of biological role, catalyzes the hydrolytic cleavage of the carbon-nitrogen bond in imidazolone-5-propanoate to yield N-formimidoyl-L-glutamate. It is the third step in the universal histidine degradation pathway. In Pseudomonas aeruginosa (strain ATCC 15692 / DSM 22644 / CIP 104116 / JCM 14847 / LMG 12228 / 1C / PRS 101 / PAO1), this protein is Imidazolonepropionase.